The chain runs to 192 residues: MILPQEFYFEDTTLVAQSLLGKVLNIRTDSGIQKARIIETEAYLGIEDPACHTFEDRRTERTKSMYLDGGHSYVYMIYGMYFCLNFVTRTHQHPEAVLIRAVEPLPAQENLRKKDLKTNGPGKLCKYYGITRKHDGLKLWKKSSDLYVTDEDFKVSKKQIIPTARVGVDYAGEAAKWPLRFYLRDHLFVSKK.

This sequence belongs to the DNA glycosylase MPG family.

This chain is Putative 3-methyladenine DNA glycosylase, found in Bdellovibrio bacteriovorus (strain ATCC 15356 / DSM 50701 / NCIMB 9529 / HD100).